Consider the following 101-residue polypeptide: Small ribosomal subunit protein uS14 (101 aa).

The protein belongs to the universal ribosomal protein uS14 family. As to quaternary structure, part of the 30S ribosomal subunit. Contacts proteins S3 and S10.

Binds 16S rRNA, required for the assembly of 30S particles and may also be responsible for determining the conformation of the 16S rRNA at the A site. In Burkholderia multivorans (strain ATCC 17616 / 249), this protein is Small ribosomal subunit protein uS14.